The following is a 652-amino-acid chain: Vitrin (652 aa).

The N-terminal stretch at 1-26 (MGIVVLTMKASVIEMFLVLLVTGIQS) is a signal peptide. Positions 40-133 (TVPQISCDVR…LSLPRWRESF (94 aa)) constitute an LCCL domain. Cystine bridges form between cysteine 46/cysteine 62 and cysteine 66/cysteine 86. 2 disordered regions span residues 137–181 (EGKP…AAQP) and 196–231 (THTT…EPAL). A compositionally biased stretch (low complexity) spans 145–158 (TYPSSLTYSSSKSP). The span at 196-212 (THTTLPKPSPSAGSTAS) shows a compositional bias: polar residues. 2 VWFA domains span residues 267–452 (DLSF…VKRV) and 469–638 (DIGF…VPKV). Residue asparagine 494 is glycosylated (N-linked (GlcNAc...) asparagine).

As to quaternary structure, binds dermatan sulfate and chondroitin sulfate.

The protein localises to the secreted. It is found in the extracellular space. Its subcellular location is the extracellular matrix. In terms of biological role, promotes matrix assembly and cell adhesiveness. Plays a role in spinal cord formation by regulating the proliferation and differentiation of neural stem cells. This Bos taurus (Bovine) protein is Vitrin (VIT).